The chain runs to 198 residues: Ribonuclease HII (198 aa).

The 188-residue stretch at 11 to 198 (NLIAGVDEVG…GPVKRVLGLV (188 aa)) folds into the RNase H type-2 domain. A divalent metal cation-binding residues include Asp17, Glu18, and Asp109.

Belongs to the RNase HII family. The cofactor is Mn(2+). Mg(2+) is required as a cofactor.

The protein localises to the cytoplasm. It catalyses the reaction Endonucleolytic cleavage to 5'-phosphomonoester.. Its function is as follows. Endonuclease that specifically degrades the RNA of RNA-DNA hybrids. The polypeptide is Ribonuclease HII (Yersinia enterocolitica serotype O:8 / biotype 1B (strain NCTC 13174 / 8081)).